The primary structure comprises 67 residues: MSSLPVMVLFGLSFPPVFFVLLVSLTLFFVVNCLLQPTGIYDFVWHPALFNSALFCCLFYLLFRYGL.

2 helical membrane passes run 10–30 (FGLS…LFFV) and 43–63 (FVWH…YLLF).

This sequence belongs to the AaeX family.

The protein resides in the cell membrane. This is Protein AaeX from Pectobacterium carotovorum subsp. carotovorum (strain PC1).